We begin with the raw amino-acid sequence, 358 residues long: MDGFSGGIDINIFDSNSTENGSGDFEDFSEPCFMHDNSDFNRIFLPTIYSFIFLLGIIGNGLVVVVMGYQKKSRTMTDKYRLHLSVADLLFVFTLPFWSVDAAIGWYFKEFLCKAVHVIYTVNLYSSVLILAFISLDRYLAIVHATNSQGSRKMLADKVVYAGVWLPALLLTVPDLVFARVSDENGQFVCDRIYPIDNRETWTVGFRFLHITVGLILPGLIILICYCVIISKLSHSKGHQKRKALKTTVILILAFFACWLPYYVCLTTDTFMLLGLLKADCIWENTLHKAISITEALAFFHCCLNPILYAFLGAKFKTSAQNAFTSVSRGSSLKILSKKRAGLSSVSTESESSSFHSS.

The important for chemokine binding and signaling stretch occupies residues 1-25 (MDGFSGGIDINIFDSNSTENGSGDF). Topologically, residues 1-44 (MDGFSGGIDINIFDSNSTENGSGDFEDFSEPCFMHDNSDFNRIF) are extracellular. Asn-16 and Asn-20 each carry an N-linked (GlcNAc...) asparagine glycan. Cystine bridges form between Cys-32–Cys-281 and Cys-113–Cys-190. A helical membrane pass occupies residues 45–67 (LPTIYSFIFLLGIIGNGLVVVVM). Residues 68–81 (GYQKKSRTMTDKYR) are Cytoplasmic-facing. The helical transmembrane segment at 82–103 (LHLSVADLLFVFTLPFWSVDAA) threads the bilayer. The tract at residues 98-101 (WSVD) is chemokine binding. Residues 104–114 (IGWYFKEFLCK) lie on the Extracellular side of the membrane. The helical transmembrane segment at 115–134 (AVHVIYTVNLYSSVLILAFI) threads the bilayer. Residues 117–121 (HVIYT) form a chemokine binding region. Residues 135–158 (SLDRYLAIVHATNSQGSRKMLADK) are Cytoplasmic-facing. Positions 139–151 (YLAIVHATNSQGS) are involved in dimerization; when bound to chemokine. Residues 159-178 (VVYAGVWLPALLLTVPDLVF) form a helical membrane-spanning segment. At 179–202 (ARVSDENGQFVCDRIYPIDNRETW) the chain is on the extracellular side. Positions 190–194 (CDRIY) are chemokine binding, important for signaling. The chain crosses the membrane as a helical span at residues 203-223 (TVGFRFLHITVGLILPGLIIL). Residues 224 to 248 (ICYCVIISKLSHSKGHQKRKALKTT) lie on the Cytoplasmic side of the membrane. Residues 249–268 (VILILAFFACWLPYYVCLTT) form a helical membrane-spanning segment. At 269–289 (DTFMLLGLLKADCIWENTLHK) the chain is on the extracellular side. Residues 290–309 (AISITEALAFFHCCLNPILY) traverse the membrane as a helical segment. The Cytoplasmic segment spans residues 310 to 358 (AFLGAKFKTSAQNAFTSVSRGSSLKILSKKRAGLSSVSTESESSSFHSS). Positions 338–358 (KKRAGLSSVSTESESSSFHSS) are disordered. Over residues 344–358 (SSVSTESESSSFHSS) the composition is skewed to low complexity.

This sequence belongs to the G-protein coupled receptor 1 family. As to quaternary structure, monomer. Can form dimers. Post-translationally, sulfation is required for efficient binding of cxcl12/sdf-1alpha and promotes its dimerization. O- and N-glycosylated.

Its subcellular location is the cell membrane. The protein resides in the cytoplasm. It localises to the nucleus. It is found in the early endosome. The protein localises to the late endosome. Its subcellular location is the lysosome. In terms of biological role, receptor for the C-X-C chemokine cxcl12/sdf-1. Transduces a signal by increasing the intracellular calcium ion level. Signaling with cxcl12/sdf-1 mediates the directional movement of mesodermal cells during gastrulation. May play a role in the migration of embryonic presumptive primordial germ cells (pPGCs). May also be involved in regulating migration of hematopoietic stem cells into the larval liver. In Xenopus tropicalis (Western clawed frog), this protein is C-X-C chemokine receptor type 4.